The following is a 71-amino-acid chain: Small ribosomal subunit protein bS21 (71 aa).

It belongs to the bacterial ribosomal protein bS21 family.

This is Small ribosomal subunit protein bS21 from Acinetobacter baylyi (strain ATCC 33305 / BD413 / ADP1).